The chain runs to 398 residues: Phosphoglycerate kinase (398 aa).

Substrate contacts are provided by residues 21–23 (DFN), arginine 41, 64–67 (HLGR), arginine 123, and arginine 156. Residues lysine 207, glycine 294, glutamate 325, and 354 to 357 (GGDS) each bind ATP.

This sequence belongs to the phosphoglycerate kinase family. As to quaternary structure, monomer.

The protein localises to the cytoplasm. The enzyme catalyses (2R)-3-phosphoglycerate + ATP = (2R)-3-phospho-glyceroyl phosphate + ADP. The protein operates within carbohydrate degradation; glycolysis; pyruvate from D-glyceraldehyde 3-phosphate: step 2/5. The protein is Phosphoglycerate kinase of Salinibacter ruber (strain DSM 13855 / M31).